A 32-amino-acid chain; its full sequence is C-reactive protein (32 aa).

The region spanning 2 to 32 is the Pentraxin (PTX) domain; the sequence is VIKTLVFQSESNNSFVELIPMKPLNLRAFXL.

The protein belongs to the pentraxin family. In terms of assembly, homopentamer. Pentraxin (or pentaxin) have a discoid arrangement of 5 non-covalently bound subunits. Post-translationally, glycosylated.

It localises to the secreted. Functionally, displays several functions associated with host defense: it promotes agglutination, bacterial capsular swelling, phagocytosis, and complement fixation through its calcium-dependent binding to phosphorylcholine. This is C-reactive protein from Pleuronectes platessa (European plaice).